Here is a 213-residue protein sequence, read N- to C-terminus: Glutathione S-transferase APIC (213 aa).

The 82-residue stretch at 1–82 (MAIKVHGSPM…YIAHVYADNG (82 aa)) folds into the GST N-terminal domain. Glutathione-binding positions include Ser11, 12-13 (TA), 40-41 (HK), 53-54 (QV), and 66-67 (ES). The GST C-terminal domain occupies 89 to 213 (DPKKMPIMSV…WVKGLEKLQK (125 aa)).

This sequence belongs to the GST superfamily. Phi family.

The enzyme catalyses RX + glutathione = an S-substituted glutathione + a halide anion + H(+). Its function is as follows. Conjugation of reduced glutathione to a wide number of exogenous and endogenous hydrophobic electrophiles. This chain is Glutathione S-transferase APIC, found in Nicotiana tabacum (Common tobacco).